The following is a 224-amino-acid chain: Cytidylate kinase (224 aa).

Residue 11–19 (GPAAAGKST) coordinates ATP.

The protein belongs to the cytidylate kinase family. Type 1 subfamily.

It is found in the cytoplasm. The catalysed reaction is CMP + ATP = CDP + ADP. It carries out the reaction dCMP + ATP = dCDP + ADP. The chain is Cytidylate kinase from Geobacillus thermodenitrificans (strain NG80-2).